The chain runs to 311 residues: tRNA(Ile)-lysidine synthase (311 aa).

31–36 lines the ATP pocket; the sequence is SGGKDS.

Belongs to the tRNA(Ile)-lysidine synthase family.

The protein localises to the cytoplasm. The catalysed reaction is cytidine(34) in tRNA(Ile2) + L-lysine + ATP = lysidine(34) in tRNA(Ile2) + AMP + diphosphate + H(+). In terms of biological role, ligates lysine onto the cytidine present at position 34 of the AUA codon-specific tRNA(Ile) that contains the anticodon CAU, in an ATP-dependent manner. Cytidine is converted to lysidine, thus changing the amino acid specificity of the tRNA from methionine to isoleucine. This chain is tRNA(Ile)-lysidine synthase, found in Petrotoga mobilis (strain DSM 10674 / SJ95).